The sequence spans 634 residues: Poly(ribitol-phosphate) beta-glucosyltransferase (634 aa).

This sequence belongs to the glycosyltransferase 2 family.

The catalysed reaction is 4-O-[(D-ribitylphospho)(n)-D-ribitylphospho-(2R)-glycerylphospho]-N-acetyl-beta-D-mannosaminyl-(1-&gt;4)-N-acetyl-alpha-D-glucosaminyl di-trans,octa-cis-undecaprenyl diphosphate + n UDP-alpha-D-glucose = 4-O-[(2-beta-D-glucosyl-D-ribitylphospho)(n)-D-ribitylphospho-(2R)-glycerylphospho]-N-acetyl-beta-D-mannosaminyl-(1-&gt;4)-N-acetyl-alpha-D-glucosaminyl di-trans,octa-cis-undecaprenyl diphosphate + n UDP + n H(+). It functions in the pathway cell wall biogenesis; poly(ribitol phosphate) teichoic acid biosynthesis. Its function is as follows. Attaches glucose residues to poly(RboP)-wall teichoic acids (WTAs). The sequence is that of Poly(ribitol-phosphate) beta-glucosyltransferase from Bacillus spizizenii (strain ATCC 23059 / NRRL B-14472 / W23) (Bacillus subtilis subsp. spizizenii).